The sequence spans 150 residues: Arginine repressor (150 aa).

Belongs to the ArgR family.

It is found in the cytoplasm. The protein operates within amino-acid biosynthesis; L-arginine biosynthesis [regulation]. In terms of biological role, regulates arginine biosynthesis genes. The chain is Arginine repressor from Symbiobacterium thermophilum (strain DSM 24528 / JCM 14929 / IAM 14863 / T).